A 221-amino-acid chain; its full sequence is Large ribosomal subunit protein bL25 (221 aa).

Positions 192–221 (APRVEKEETEEDTVAPGDVPAENSKDADEE) are disordered.

Belongs to the bacterial ribosomal protein bL25 family. CTC subfamily. In terms of assembly, part of the 50S ribosomal subunit; part of the 5S rRNA/L5/L18/L25 subcomplex. Contacts the 5S rRNA. Binds to the 5S rRNA independently of L5 and L18.

Its function is as follows. This is one of the proteins that binds to the 5S RNA in the ribosome where it forms part of the central protuberance. This chain is Large ribosomal subunit protein bL25, found in Idiomarina loihiensis (strain ATCC BAA-735 / DSM 15497 / L2-TR).